Reading from the N-terminus, the 147-residue chain is Large ribosomal subunit protein uL15 (147 aa).

Residues 1-42 (MTIKLHHLRPAPGAKTDKTRVGRGEGSKGKTAGRGTKGTKAR) are disordered. Over residues 15–28 (KTDKTRVGRGEGSK) the composition is skewed to basic and acidic residues.

Belongs to the universal ribosomal protein uL15 family. As to quaternary structure, part of the 50S ribosomal subunit.

In terms of biological role, binds to the 23S rRNA. This chain is Large ribosomal subunit protein uL15, found in Nocardia farcinica (strain IFM 10152).